Here is a 510-residue protein sequence, read N- to C-terminus: Indoleacetate--CoA ligase (510 aa).

Belongs to the ATP-dependent AMP-binding enzyme family. In terms of assembly, monomer.

It catalyses the reaction (indol-3-yl)acetate + ATP + CoA = (indol-3-yl)acetyl-CoA + AMP + diphosphate. It carries out the reaction (indol-3-yl)acetate + ATP + H(+) = (indol-3-yl)acetyl-AMP + diphosphate. The catalysed reaction is (indol-3-yl)acetyl-AMP + CoA = (indol-3-yl)acetyl-CoA + AMP + H(+). With respect to regulation, inhibited by high concentrations of substrates, and by the synthetic auxin compound 2,4-dichlorophenoxyacetate (2,4-D), which does not serve as substrate. Involved in degradation of indoleacetate, the most common member of the auxin class of plant hormones. Highly specific indoleacetate-CoA ligase which catalyzes the ATP-dependent activation of indoleacetate (IAA) to indoleacetyl-CoA. Also activates some closely related compounds such as the non-physiological compound (2-naphthyl)acetate and phenylacetate, which seems to be a fortuitous substrate for IaaB. The chain is Indoleacetate--CoA ligase from Aromatoleum aromaticum (strain DSM 19018 / LMG 30748 / EbN1) (Azoarcus sp. (strain EbN1)).